The sequence spans 449 residues: MKTTHFSSSSSSDRRIGALLRHLNSGSDSDNLSSLYASPTSGGTGGSVFSHLVQAPEDPILGVTVAYNKDPSPVKLNLGVGAYRTEEGKPLVLNVVRKAEQQLINDRTRIKEYLPIVGLVEFNKLSAKLILGADSPAIRENRITTVECLSGTGSLRVGGEFLAKHYHQKTIYITQPTWGNHPKIFTLAGLTVKTYRYYDPATRGLNFQGLLEDLGAAAPGSIVLLHACAHNPTGVDPTIQQWEQIRKLMRSKGLMPFFDSAYQGFASGSLDTDAKPIRMFVADGGECLVAQSYAKNMGLYGERVGALSIVCKSADVAGRVESQLKLVIRPMYSSPPIHGASIVAVILRDKNLFNEWTLELKAMADRIISMRKQLFEALRTRGTPGDWSHIIKQIGMFTFTGLNPAQVSFMTKEYHIYMTSDGRISMAGLSSKTVPHLADAIHAVVTKAV.

A chloroplast-targeting transit peptide spans 1–43; the sequence is MKTTHFSSSSSSDRRIGALLRHLNSGSDSDNLSSLYASPTSGG. Positions 81, 178, and 231 each coordinate L-aspartate. An N6-(pyridoxal phosphate)lysine modification is found at K295. Position 423 (R423) interacts with L-aspartate.

It belongs to the class-I pyridoxal-phosphate-dependent aminotransferase family. As to quaternary structure, homodimer. Pyridoxal 5'-phosphate serves as cofactor. In terms of tissue distribution, expressed in roots, cauline leaves, flowers, hypocotyl epidermis and root hair cells.

The protein resides in the plastid. The protein localises to the chloroplast. It carries out the reaction L-aspartate + 2-oxoglutarate = oxaloacetate + L-glutamate. Functionally, amino acid aminotransferase important for the metabolism of amino acids and Krebs-cycle related organic acids. No activity with D-Asp or D-Ala as amino donors. In plants, it is involved in nitrogen metabolism and in aspects of carbon and energy metabolism. The protein is Aspartate aminotransferase 3, chloroplastic (ASP3) of Arabidopsis thaliana (Mouse-ear cress).